We begin with the raw amino-acid sequence, 620 residues long: Mitochondrial Rho GTPase 2 (620 aa).

Residues 1–594 (MRRDVRILLL…ELHPTSFWLR (594 aa)) are Cytoplasmic-facing. One can recognise a Miro 1 domain in the interval 2–168 (RRDVRILLLG…FYYAQKAVLH (167 aa)). GTP is bound by residues G16, K17, T18, and S19. T18 is a binding site for Mg(2+). D57 contributes to the Mg(2+) binding site. S59 provides a ligand contact to GTP. A Glycyl lysine isopeptide (Lys-Gly) (interchain with G-Cter in ubiquitin) cross-link involves residue K96. GTP is bound by residues N118, K119, D121, A149, and K150. K119 is covalently cross-linked (Glycyl lysine isopeptide (Lys-Gly) (interchain with G-Cter in ubiquitin)). K164 is covalently cross-linked (Glycyl lysine isopeptide (Lys-Gly) (interchain with G-Cter in ubiquitin)). EF-hand domains are found at residues 184-219 (ACAQALTRIFRLSDQDRDHGLSDEELNAFQKSCFGH) and 304-339 (RGYQFVQRMFEKHDQDHDGVLSPTELQNLFSVFSGA). Positions 197, 199, 201, 208, 317, 319, 321, and 328 each coordinate Ca(2+). The Miro 2 domain occupies 415–578 (RSVLMCKVLG…FTQLATMATF (164 aa)). GTP contacts are provided by G427, G429, K430, S431, and A432. S431 serves as a coordination point for Mg(2+). Residue E473 coordinates Mg(2+). Residues K527, D529, and C558 each contribute to the GTP site. Residues 595–617 (GVLVAVGTAVAAVLSFSLYRVLV) traverse the membrane as a helical; Anchor for type IV membrane protein segment. Over 618–620 (KSR) the chain is Mitochondrial intermembrane.

It belongs to the mitochondrial Rho GTPase family. As to quaternary structure, homodimer. Interacts with the kinesin-binding proteins TRAK1/OIP106 and TRAK2/GRIF1, forming a link between mitochondria and the trafficking apparatus of the microtubules. Interacts with ARMCX3. Found in a complex with KIF5B, OGT, RHOT1 and TRAK1. In terms of processing, ubiquitinated by PRKN in a PINK1-dependent manner, leading to its degradation. As to expression, ubiquitously expressed.

The protein resides in the mitochondrion outer membrane. The enzyme catalyses GTP + H2O = GDP + phosphate + H(+). It catalyses the reaction ATP + H2O = ADP + phosphate + H(+). It carries out the reaction UTP + H2O = UDP + phosphate + H(+). In terms of biological role, atypical mitochondrial nucleoside-triphosphatase (NTPase) involved in mitochondrial trafficking. Probably involved in control of anterograde transport of mitochondria and their subcellular distribution. Can hydrolyze GTP, ATP and UTP. This chain is Mitochondrial Rho GTPase 2 (Rhot2), found in Mus musculus (Mouse).